The chain runs to 453 residues: Nuclear distribution protein PAC1 (453 aa).

The LisH domain occupies 19–51; sequence QKDELHKSILDYFKTNNLHESFATLMREANQEG. Residues 69–96 adopt a coiled-coil conformation; the sequence is TSVIRLQKKIMEMESRISQLQEELSAAP. 7 WD repeats span residues 120-161, 162-201, 205-244, 247-286, 314-355, 356-395, and 413-452; these read GHRL…RTLK, GHTKAVQDVDFDSKGNYVLSCSSDLSIKVWDANNDYKNIK, GHDHSVSSVRFLPGDDYIVSASRDKTIKIWEFSTGFCTKT, GHAEWVRSAIPSDDAKWLVSCSTDQTARVWDVSSGETKVE, LDPN…KTLT, GHDNWVRGLAFSPNGKSLLSVSDDKTMRLWDLQSGRCTRT, and IEAPIPPAQDGEEAGRKQPEARTVNVVATSSVDLTIKIWT.

This sequence belongs to the WD repeat LIS1/nudF family. Self-associates. Interacts with NDL1 and dynein.

It is found in the cytoplasm. The protein resides in the cytoskeleton. The protein localises to the spindle pole. Functionally, positively regulates the activity of the minus-end directed microtubule motor protein dynein. May enhance dynein-mediated microtubule sliding by targeting dynein to the microtubule plus end. Required for nuclear migration during vegetative growth as well as development. Required for localization of dynein to the mitotic spindle poles. Recruits additional proteins to the dynein complex at SPBs. Required for retrograde early endosome (EE) transport from the hyphal tip. The sequence is that of Nuclear distribution protein PAC1 from Mycosarcoma maydis (Corn smut fungus).